The sequence spans 428 residues: Glutamate-1-semialdehyde 2,1-aminomutase 1 (428 aa).

Lys-267 carries the post-translational modification N6-(pyridoxal phosphate)lysine.

This sequence belongs to the class-III pyridoxal-phosphate-dependent aminotransferase family. HemL subfamily. As to quaternary structure, homodimer. Pyridoxal 5'-phosphate is required as a cofactor.

It localises to the cytoplasm. It carries out the reaction (S)-4-amino-5-oxopentanoate = 5-aminolevulinate. It participates in porphyrin-containing compound metabolism; protoporphyrin-IX biosynthesis; 5-aminolevulinate from L-glutamyl-tRNA(Glu): step 2/2. In Staphylococcus aureus (strain NCTC 8325 / PS 47), this protein is Glutamate-1-semialdehyde 2,1-aminomutase 1 (hemL1).